The primary structure comprises 309 residues: GATA transcription factor 25 (309 aa).

Residues 1-35 (MFGRHSIIPNNQIGTASASAGEDHVSASATSGHIP) are disordered. A compositionally biased stretch (polar residues) spans 8-18 (IPNNQIGTASA). The region spanning 77-112 (PPEGANQLTISFRGQVYVFDAVGADKVDAVLSLLGG) is the Tify domain. Residues 146 to 188 (RAQSLDRFRKKRNARCFEKKVRYGVRQEVALRMARNKGQFTSS) enclose the CCT domain. Positions 187–202 (SSKMTDGAYNSGTDQD) are enriched in polar residues. The interval 187 to 207 (SSKMTDGAYNSGTDQDSAQDD) is disordered. A GATA-type zinc finger spans residues 208 to 267 (AHPEISCTHCGISSKCTPMMRRGPSGPRTLCNACGLFWANRGTLRDLSKKTEENQLALMK). The tract at residues 290–309 (EHTSMVSLANGDNSNLLGDH) is disordered. The segment covering 293-309 (SMVSLANGDNSNLLGDH) has biased composition (polar residues).

Belongs to the type IV zinc-finger family. Class C subfamily. In terms of tissue distribution, predominantly expressed in shoot apices, inflorescences and roots.

It localises to the nucleus. Functionally, transcriptional activator that specifically binds 5'-GATA-3' or 5'-GAT-3' motifs within gene promoters. In Arabidopsis thaliana (Mouse-ear cress), this protein is GATA transcription factor 25 (GATA25).